A 654-amino-acid polypeptide reads, in one-letter code: Cysteine-rich receptor-like protein kinase 40 (654 aa).

An N-terminal signal peptide occupies residues 1–27 (MGKCSALMIFLSSSLLLVLQTLHVVNA). 2 consecutive Gnk2-homologous domains span residues 28–131 (VKCF…NQST) and 143–250 (WPSP…LYSF). Over 28-287 (VKCFGNSFNG…VKKGKSIGYG (260 aa)) the chain is Extracellular. Asparagine 38, asparagine 65, asparagine 128, asparagine 154, asparagine 167, and asparagine 256 each carry an N-linked (GlcNAc...) asparagine glycan. The helical transmembrane segment at 288 to 308 (GIIAIVVVFTFINLLVFIGFI) threads the bilayer. At 309 to 654 (KVYARRGKLN…DDVFTELSCR (346 aa)) the chain is on the cytoplasmic side. Residues 348 to 619 (FSSENTLGQG…VIIWLGSETI (272 aa)) form the Protein kinase domain. ATP contacts are provided by residues 354-362 (LGQGGFGTV) and lysine 376. Tyrosine 421 carries the post-translational modification Phosphotyrosine. Residue aspartate 473 is the Proton acceptor of the active site. The residue at position 477 (serine 477) is a Phosphoserine. Threonine 513 bears the Phosphothreonine mark. Tyrosine 521 carries the post-translational modification Phosphotyrosine.

It belongs to the protein kinase superfamily. Ser/Thr protein kinase family. CRK subfamily.

It localises to the membrane. The enzyme catalyses L-seryl-[protein] + ATP = O-phospho-L-seryl-[protein] + ADP + H(+). It catalyses the reaction L-threonyl-[protein] + ATP = O-phospho-L-threonyl-[protein] + ADP + H(+). The protein is Cysteine-rich receptor-like protein kinase 40 (CRK40) of Arabidopsis thaliana (Mouse-ear cress).